Reading from the N-terminus, the 378-residue chain is Signal peptide peptidase (378 aa).

Residues 1-27 (MDSAVSDPHNGSAEAGTPANGTTRPPS) are disordered. Residues 1–31 (MDSAVSDPHNGSAEAGTPANGTTRPPSTPEG) are Lumenal-facing. 2 N-linked (GlcNAc...) asparagine glycosylation sites follow: Asn10 and Asn20. Residues 32–52 (IALAYGSLLLMALLPIFFGAL) form a helical membrane-spanning segment. Residues 53–77 (RSVRCARGKSSSDMPETITSRDAAR) lie on the Cytoplasmic side of the membrane. A helical membrane pass occupies residues 78 to 98 (FPIIASCTLLGLYLFFKIFSQ). Residues 99–100 (EY) lie on the Lumenal side of the membrane. Residues 101–121 (INLLLSMYFFVLGILALSHTI) form a helical membrane-spanning segment. At 122–157 (SPFMNKFFPANFPNRQYQLLFTQGSGENKEEIINYE) the chain is on the cytoplasmic side. Residues 158 to 178 (FDTKDLVCLGLSSVVGVWYLL) traverse the membrane as a helical segment. The Lumenal segment spans residues 179 to 181 (RKH). The chain crosses the membrane as a helical span at residues 182 to 202 (WIANNLFGLAFSLNGVELLHL). The Cytoplasmic segment spans residues 203 to 209 (NNVSTGC). The helical transmembrane segment at 210–230 (ILLGGLFIYDIFWVFGTNVMV) threads the bilayer. Asp219 is a catalytic residue. The Lumenal segment spans residues 231–256 (TVAKSFEAPIKLVFPQDLLEKGLEAD). A helical transmembrane segment spans residues 257 to 277 (NFAMLGLGDIVIPGIFIALLL). The active site involves Asp265. Topologically, residues 278–290 (RFDISLKKNTHTY) are cytoplasmic. A helical transmembrane segment spans residues 291-311 (FYTSFAAYIFGLGLTIFIMHI). Residues 312–314 (FKH) are Lumenal-facing. The chain crosses the membrane as a helical span at residues 315–335 (AQPALLYLVPACIGFPVLVAL). A PAL motif is present at residues 317-319 (PAL). Residues 336–378 (AKGEVAEMFSYEESNPKDPAAETESKEESTEASASKRLEKKEK) lie on the Cytoplasmic side of the membrane. Residues 346–378 (YEESNPKDPAAETESKEESTEASASKRLEKKEK) are disordered. Residues 349–378 (SNPKDPAAETESKEESTEASASKRLEKKEK) are compositionally biased toward basic and acidic residues. At Ser368 the chain carries Phosphoserine.

Belongs to the peptidase A22B family. As to quaternary structure, monomer. Homodimer. Interacts with RNF139. Interacts with DERL1 and XBP1 isoform 1. As to expression, widely expressed with highest levels in liver and kidney. In the brain, expressed predominantly in hippocampus, amygdala, piriform cortex, choroid plexus and arcuate nucleus of the hypothalamic area. Isoform 1 is more strongly expressed than isoform 4 in most tissues except brain and skeletal muscle where isoform 4 is the dominant isoform and in testis where isoform 1 and isoform 4 are expressed at similar levels. In the brain, isoform 4 is not detected in the choroid plexus.

It localises to the endoplasmic reticulum membrane. Its subcellular location is the membrane. It is found in the cell membrane. In terms of biological role, catalyzes intramembrane proteolysis of signal peptides that have been removed from precursors of secretory and membrane proteins, resulting in the release of the fragment from the ER membrane into the cytoplasm. Required to generate lymphocyte cell surface (HLA-E) epitopes derived from MHC class I signal peptides. Involved in the intramembrane cleavage of the integral membrane protein PSEN1. Cleaves the integral membrane protein XBP1 isoform 1 in a DERL1/RNF139-dependent manner. May play a role in graft rejection. This is Signal peptide peptidase from Mus musculus (Mouse).